A 186-amino-acid polypeptide reads, in one-letter code: ATP-dependent protease subunit HslV (186 aa).

The active site involves threonine 13. Positions 167, 170, and 173 each coordinate Na(+).

It belongs to the peptidase T1B family. HslV subfamily. In terms of assembly, a double ring-shaped homohexamer of HslV is capped on each side by a ring-shaped HslU homohexamer. The assembly of the HslU/HslV complex is dependent on binding of ATP.

It is found in the cytoplasm. The catalysed reaction is ATP-dependent cleavage of peptide bonds with broad specificity.. Allosterically activated by HslU binding. Its function is as follows. Protease subunit of a proteasome-like degradation complex believed to be a general protein degrading machinery. The protein is ATP-dependent protease subunit HslV of Allorhizobium ampelinum (strain ATCC BAA-846 / DSM 112012 / S4) (Agrobacterium vitis (strain S4)).